A 315-amino-acid chain; its full sequence is PDZ domain-containing protein GIPC2 (315 aa).

Basic residues predominate over residues methionine 1–lysine 12. The interval methionine 1–alanine 34 is disordered. One can recognise a PDZ domain in the interval glutamate 117 to glutamate 197.

This sequence belongs to the GIPC family. As to quaternary structure, probably interacts with SEMA5A. In terms of tissue distribution, expressed at highest levels in ascending colon and at moderate levels in adult kidney. Expressed at low levels in adult pancreas and at very low levels in adult liver. Expression is down-regulated in several primary tumors, such as kidney, colon and rectal tumors.

The protein localises to the cytoplasm. This chain is PDZ domain-containing protein GIPC2 (GIPC2), found in Homo sapiens (Human).